The chain runs to 20 residues: Agglutinin beta-2 chain (20 aa).

The disordered stretch occupies residues 1–20; it reads GRNGKSQSIIVGPWGDRVTN.

The protein belongs to the jacalin lectin family. As to quaternary structure, formed of four alpha chains and four beta chains.

D-galactose-specific lectin, binds the T-antigen structure Gal-beta1,3-GalNAc. The polypeptide is Agglutinin beta-2 chain (Maclura pomifera (Osage orange)).